Reading from the N-terminus, the 87-residue chain is Small ribosomal subunit protein uS15c (87 aa).

It belongs to the universal ribosomal protein uS15 family. As to quaternary structure, part of the 30S ribosomal subunit.

The protein localises to the plastid. It is found in the chloroplast. This Illicium oligandrum (Star anise) protein is Small ribosomal subunit protein uS15c (rps15).